The primary structure comprises 262 residues: Alpha/beta-gliadin A-I (262 aa).

The signal sequence occupies residues 1-20 (MKTFLILALLAIVATTATTA). 3 disordered regions span residues 51-73 (LGQQ…PSQQ), 87-120 (PYSQ…QQQQ), and 225-251 (YPLG…QQLP). Composition is skewed to pro residues over residues 56 to 71 (PFPP…PFPS) and 93 to 104 (PFRPQQPYPQPQ). Residues 105-120 (PQYSQPQQPISQQQQQ) are compositionally biased toward low complexity. The segment covering 232–251 (FRPSQQNPQAQGSVQPQQLP) has biased composition (polar residues).

The protein belongs to the gliadin/glutenin family. Substrate of transglutaminase.

Its function is as follows. Gliadin is the major seed storage protein in wheat. This is Alpha/beta-gliadin A-I from Triticum aestivum (Wheat).